The primary structure comprises 181 residues: Oligoribonuclease (181 aa).

One can recognise an Exonuclease domain in the interval Leu8 to Leu171. Tyr129 is a catalytic residue.

The protein belongs to the oligoribonuclease family.

Its subcellular location is the cytoplasm. Its function is as follows. 3'-to-5' exoribonuclease specific for small oligoribonucleotides. The protein is Oligoribonuclease of Nitrosomonas europaea (strain ATCC 19718 / CIP 103999 / KCTC 2705 / NBRC 14298).